Reading from the N-terminus, the 149-residue chain is Deoxyuridine 5'-triphosphate nucleotidohydrolase (149 aa).

Substrate contacts are provided by residues 68–70, asparagine 81, and 85–87; these read RSG and LID.

This sequence belongs to the dUTPase family. Mg(2+) serves as cofactor.

The catalysed reaction is dUTP + H2O = dUMP + diphosphate + H(+). The protein operates within pyrimidine metabolism; dUMP biosynthesis; dUMP from dCTP (dUTP route): step 2/2. This enzyme is involved in nucleotide metabolism: it produces dUMP, the immediate precursor of thymidine nucleotides and it decreases the intracellular concentration of dUTP so that uracil cannot be incorporated into DNA. The polypeptide is Deoxyuridine 5'-triphosphate nucleotidohydrolase (Laribacter hongkongensis (strain HLHK9)).